The sequence spans 74 residues: MSTPDFSTAENNQELANEVSCLKAMLTLMLQAMGQADAGRVMLKMEKQLALIEDETQAAVFSKTVKQIKQAYRQ.

This is an uncharacterized protein from Escherichia coli (strain K12).